The following is a 62-amino-acid chain: Photosystem II reaction center protein Z (62 aa).

A run of 2 helical transmembrane segments spans residues 8–28 (ALVALVLVSFVLVVGVPVAYA) and 41–61 (WLGSGVWIALVLLVGLLNFFV).

Belongs to the PsbZ family. PSII is composed of 1 copy each of membrane proteins PsbA, PsbB, PsbC, PsbD, PsbE, PsbF, PsbH, PsbI, PsbJ, PsbK, PsbL, PsbM, PsbT, PsbX, PsbY, PsbZ, Psb30/Ycf12, peripheral proteins PsbO, CyanoQ (PsbQ), PsbU, PsbV and a large number of cofactors. It forms dimeric complexes.

It localises to the cellular thylakoid membrane. Its function is as follows. May control the interaction of photosystem II (PSII) cores with the light-harvesting antenna, regulates electron flow through the 2 photosystem reaction centers. PSII is a light-driven water plastoquinone oxidoreductase, using light energy to abstract electrons from H(2)O, generating a proton gradient subsequently used for ATP formation. The sequence is that of Photosystem II reaction center protein Z from Nostoc sp. (strain PCC 7120 / SAG 25.82 / UTEX 2576).